A 305-amino-acid polypeptide reads, in one-letter code: MPDQLPATDSTFRHVPVLADVLLNALDEEPSVHWQSGLVVDATLGGGGHSSLLLDRYPDLRLIGLDQDPTARAAAATRLSPWKERVSIVATNFADYSPPQSASLVLADLGVSSPQLDVAARGFSFRLDGPLDMRMNPESDGETAGELIERMEESDLADLIYAYGEERLSRRIARRIKADLAAQGPYAGTASFAYAVAGCYPPKARRGRIHPATRTFQALRIAVNDELGVLDQLLSSAPGWLQPGGLLAIISFHSLEDRRVKTAFLQDERLDRITRRPLVASAEEQERNPRSRSAKLRIARKRSES.

S-adenosyl-L-methionine-binding positions include 47–49 (GGH), D66, F93, D108, and Q115. Residues 280–305 (ASAEEQERNPRSRSAKLRIARKRSES) are disordered. The span at 290-305 (RSRSAKLRIARKRSES) shows a compositional bias: basic residues.

It belongs to the methyltransferase superfamily. RsmH family.

It is found in the cytoplasm. It catalyses the reaction cytidine(1402) in 16S rRNA + S-adenosyl-L-methionine = N(4)-methylcytidine(1402) in 16S rRNA + S-adenosyl-L-homocysteine + H(+). Its function is as follows. Specifically methylates the N4 position of cytidine in position 1402 (C1402) of 16S rRNA. The polypeptide is Ribosomal RNA small subunit methyltransferase H (Synechococcus sp. (strain WH7803)).